Here is a 113-residue protein sequence, read N- to C-terminus: Iron-sulfur cluster insertion protein ErpA (113 aa).

Residues Cys41, Cys105, and Cys107 each coordinate iron-sulfur cluster.

Belongs to the HesB/IscA family. Homodimer. Iron-sulfur cluster is required as a cofactor.

Required for insertion of 4Fe-4S clusters for at least IspG. The polypeptide is Iron-sulfur cluster insertion protein ErpA (Actinobacillus pleuropneumoniae serotype 7 (strain AP76)).